A 446-amino-acid chain; its full sequence is tRNA-2-methylthio-N(6)-dimethylallyladenosine synthase (446 aa).

In terms of domain architecture, MTTase N-terminal spans 2 to 122 (KKAYVKSYGC…LPDLLRQSRE (121 aa)). Residues cysteine 11, cysteine 47, cysteine 85, cysteine 157, cysteine 161, and cysteine 164 each contribute to the [4Fe-4S] cluster site. Residues 143–375 (RNRGVTGFLT…QDLLDRQRHA (233 aa)) enclose the Radical SAM core domain. In terms of domain architecture, TRAM spans 378 to 440 (AASVGTLTEI…SNSLFGETLE (63 aa)).

The protein belongs to the methylthiotransferase family. MiaB subfamily. Monomer. [4Fe-4S] cluster serves as cofactor.

It localises to the cytoplasm. It catalyses the reaction N(6)-dimethylallyladenosine(37) in tRNA + (sulfur carrier)-SH + AH2 + 2 S-adenosyl-L-methionine = 2-methylsulfanyl-N(6)-dimethylallyladenosine(37) in tRNA + (sulfur carrier)-H + 5'-deoxyadenosine + L-methionine + A + S-adenosyl-L-homocysteine + 2 H(+). Its function is as follows. Catalyzes the methylthiolation of N6-(dimethylallyl)adenosine (i(6)A), leading to the formation of 2-methylthio-N6-(dimethylallyl)adenosine (ms(2)i(6)A) at position 37 in tRNAs that read codons beginning with uridine. This chain is tRNA-2-methylthio-N(6)-dimethylallyladenosine synthase, found in Methylorubrum extorquens (strain PA1) (Methylobacterium extorquens).